A 659-amino-acid polypeptide reads, in one-letter code: Exoribonuclease 2 (659 aa).

Positions 189–532 constitute an RNB domain; sequence RRDLTALHFV…NHRLIKACLA (344 aa). Residues 577–659 form the S1 motif domain; that stretch reads NPEFRAEVQD…ETRSLIGNLV (83 aa).

The protein belongs to the RNR ribonuclease family. RNase II subfamily.

Its subcellular location is the cytoplasm. It catalyses the reaction Exonucleolytic cleavage in the 3'- to 5'-direction to yield nucleoside 5'-phosphates.. Functionally, involved in mRNA degradation. Hydrolyzes single-stranded polyribonucleotides processively in the 3' to 5' direction. The polypeptide is Exoribonuclease 2 (Mannheimia succiniciproducens (strain KCTC 0769BP / MBEL55E)).